A 317-amino-acid polypeptide reads, in one-letter code: Periplasmic [NiFe] hydrogenase small subunit 1 (317 aa).

The tat-type signal signal peptide spans 1 to 49; that stretch reads MRFSVGLGKEGAEERLARRGVSRRDFLKFCTAIAVTMGMGPAFAPEVAR. [4Fe-4S] cluster contacts are provided by C67, C70, C164, C200, H238, C241, C266, and C272. [3Fe-4S] cluster contacts are provided by C281, C299, and C302.

It belongs to the [NiFe]/[NiFeSe] hydrogenase small subunit family. As to quaternary structure, heterodimer of a large and a small subunit. The cofactor is [3Fe-4S] cluster. Requires [4Fe-4S] cluster as cofactor. Post-translationally, predicted to be exported by the Tat system. The position of the signal peptide cleavage has not been experimentally proven.

Its subcellular location is the periplasm. It carries out the reaction 2 Fe(III)-[cytochrome c3] + H2 = 2 Fe(II)-[cytochrome c3] + 2 H(+). This is Periplasmic [NiFe] hydrogenase small subunit 1 (hynB1) from Nitratidesulfovibrio vulgaris (strain ATCC 29579 / DSM 644 / CCUG 34227 / NCIMB 8303 / VKM B-1760 / Hildenborough) (Desulfovibrio vulgaris).